Reading from the N-terminus, the 153-residue chain is Superoxide dismutase [Cu-Zn] (153 aa).

Cu cation-binding residues include His-45, His-47, and His-62. Cys-56 and Cys-145 form a disulfide bridge. The Zn(2+) site is built by His-62, His-70, His-79, and Asp-82. His-119 serves as a coordination point for Cu cation.

It belongs to the Cu-Zn superoxide dismutase family. As to quaternary structure, homodimer. It depends on Cu cation as a cofactor. The cofactor is Zn(2+).

It localises to the cytoplasm. It carries out the reaction 2 superoxide + 2 H(+) = H2O2 + O2. Destroys radicals which are normally produced within the cells and which are toxic to biological systems. This Chymomyza amoena protein is Superoxide dismutase [Cu-Zn] (Sod).